The sequence spans 1121 residues: Linoleate 10R-lipoxygenase (1121 aa).

Residues 1–66 (MLRRFSSTFK…NEKKGNSVSP (66 aa)) are disordered. Over residues 22–36 (TASSSSAAVANTNNN) the composition is skewed to low complexity. Basic and acidic residues predominate over residues 50-61 (SSSDDDRNEKKG). H253 functions as the Proton acceptor in the catalytic mechanism. D254, S269, Y271, D273, and S275 together coordinate Ca(2+).

It belongs to the peroxidase family.

The catalysed reaction is (9Z,12Z)-octadecadienoate + O2 = (8E,10R,12Z)-10-hydroperoxyoctadeca-8,12-dienoate. Responsible for the synthesis of various fatty acid-derived oxylipins. Oxidizes linoleic acid primarily to 10R-hydroperoxy-8,12-octadecadienoic acid (10R-HPODE) and, to a lesser extent, 8R-hydroperoxylinoleic acid (8R-HPODE). Also synthesizes 10-hydroxy-octadeca-8,12-dienoic acid (10-HODE) from linoleic acid and primarily 8R-hydroxy-octadeca-9-monoenoic acid (8-HOME, also known as psiB beta) from oleic acid. 8-HOME forms part of psi factor, a mixture of oxylipins that regulates the balance between sexual and asexual spore production. Displays epoxyalcohol synthase activity. Plays a role in the synthesis of prostaglandins which may be required for pathogenicity. The polypeptide is Linoleate 10R-lipoxygenase (Aspergillus fumigatus (strain ATCC MYA-4609 / CBS 101355 / FGSC A1100 / Af293) (Neosartorya fumigata)).